The primary structure comprises 335 residues: Mycobacterial beta-ketoacyl-[acyl-carrier-protein] synthase III (335 aa).

Residues C122 and H258 contribute to the active site. The interval 259-263 (QANSR) is ACP-binding. N289 is a catalytic residue.

It belongs to the thiolase-like superfamily. FabH family. As to quaternary structure, homodimer.

Its subcellular location is the cytoplasm. The enzyme catalyses malonyl-[ACP] + dodecanoyl-CoA + H(+) = 3-oxotetradecanoyl-[ACP] + CO2 + CoA. It functions in the pathway lipid metabolism; fatty acid biosynthesis. Its pathway is lipid metabolism; mycolic acid biosynthesis. Functionally, catalyzes the condensation reaction of fatty acid synthesis by the addition to an acyl acceptor of two carbons from malonyl-ACP. Catalyzes the first condensation reaction which initiates fatty acid synthesis and may therefore play a role in governing the total rate of fatty acid production. Possesses both acetoacetyl-ACP synthase and acetyl transacylase activities. Its substrate specificity determines the biosynthesis of branched-chain and/or straight-chain of fatty acids. This is Mycobacterial beta-ketoacyl-[acyl-carrier-protein] synthase III from Mycolicibacterium paratuberculosis (strain ATCC BAA-968 / K-10) (Mycobacterium paratuberculosis).